A 261-amino-acid chain; its full sequence is SLA class II histocompatibility antigen, DQ haplotype C beta chain (261 aa).

Residues 1–31 (MSGMVALRLPRGLWTAALTVMLVVLGAPVAE) form the signal peptide. The tract at residues 32-126 (GRDSPQDFVF…IEEGTTLQRR (95 aa)) is beta-1. Over 32–230 (GRDSPQDFVF…RAQSESAQSK (199 aa)) the chain is Extracellular. 2 cysteine pairs are disulfide-bonded: Cys-47/Cys-111 and Cys-149/Cys-205. Asn-51 carries an N-linked (GlcNAc...) asparagine glycan. The tract at residues 127–220 (VQPTVTISPS…SLQNPILVEW (94 aa)) is beta-2. The Ig-like C1-type domain maps to 129–233 (PTVTISPSKA…SESAQSKMLS (105 aa)). The interval 221 to 230 (RAQSESAQSK) is connecting peptide. The helical transmembrane segment at 231 to 251 (MLSGVGGFVLGLIFLGLGLFI) threads the bilayer. Topologically, residues 252–261 (RHRSQKGLVR) are cytoplasmic.

It belongs to the MHC class II family.

It is found in the membrane. This is SLA class II histocompatibility antigen, DQ haplotype C beta chain from Sus scrofa (Pig).